The chain runs to 220 residues: MAIKDAFNKMISYFDTDGVSEVEEELSSKKQEEPVTKSQQTSRPNQQQQAARASQPQQPKQARPQMQAQQRPQSQSRAAYAERPYQGQSQARVSHDYNDRRATSAPSASSRREQYQHAAHQEQTTIALKYPRKYEDAQEIVDLLIVNECVLIDFQYMLDAQARRCLDFIDGASKVLYGTLQRVGSSMYLLTPSNVSVNIEEMNIPNNGQDIGFDFDMKRR.

The interval 1–120 (MAIKDAFNKM…RREQYQHAAH (120 aa)) is disordered. Basic and acidic residues predominate over residues 26–35 (LSSKKQEEPV). The span at 39–79 (QQTSRPNQQQQAARASQPQQPKQARPQMQAQQRPQSQSRAA) shows a compositional bias: low complexity. A compositionally biased stretch (basic and acidic residues) spans 93 to 102 (VSHDYNDRRA).

The protein belongs to the SepF family. In terms of assembly, homodimer. Interacts with FtsZ.

The protein localises to the cytoplasm. Cell division protein that is part of the divisome complex and is recruited early to the Z-ring. Probably stimulates Z-ring formation, perhaps through the cross-linking of FtsZ protofilaments. Its function overlaps with FtsA. The chain is Cell division protein SepF from Streptococcus equi subsp. equi (strain 4047).